We begin with the raw amino-acid sequence, 294 residues long: N-acetylmuramic acid 6-phosphate etherase (294 aa).

An SIS domain is found at 54–217 (VIQSFEEEGR…STASMIGVGK (164 aa)). E82 acts as the Proton donor in catalysis. Residue E113 is part of the active site.

It belongs to the GCKR-like family. MurNAc-6-P etherase subfamily. Homodimer.

The enzyme catalyses N-acetyl-D-muramate 6-phosphate + H2O = N-acetyl-D-glucosamine 6-phosphate + (R)-lactate. Its pathway is amino-sugar metabolism; N-acetylmuramate degradation. Functionally, specifically catalyzes the cleavage of the D-lactyl ether substituent of MurNAc 6-phosphate, producing GlcNAc 6-phosphate and D-lactate. The polypeptide is N-acetylmuramic acid 6-phosphate etherase (Bacillus cereus (strain AH820)).